A 144-amino-acid polypeptide reads, in one-letter code: Ribonuclease VapC1 (144 aa).

The PINc domain maps to 6 to 132; that stretch reads VFVDGNVIVD…SFYSPDIEVL (127 aa). Mg(2+) contacts are provided by D9 and D102.

Belongs to the PINc/VapC protein family. It depends on Mg(2+) as a cofactor.

In terms of biological role, toxic component of a type II toxin-antitoxin (TA) system. An RNase. The polypeptide is Ribonuclease VapC1 (Aquifex aeolicus (strain VF5)).